A 341-amino-acid polypeptide reads, in one-letter code: L-threonine 3-dehydrogenase (341 aa).

Position 38 (Cys38) interacts with Zn(2+). Active-site charge relay system residues include Thr40 and His43. Zn(2+) contacts are provided by His63, Glu64, Cys93, Cys96, Cys99, and Cys107. NAD(+) is bound by residues Ile175, Asp195, Arg200, 262 to 264 (LGI), and 286 to 287 (IY).

The protein belongs to the zinc-containing alcohol dehydrogenase family. As to quaternary structure, homotetramer. Zn(2+) is required as a cofactor.

It is found in the cytoplasm. It carries out the reaction L-threonine + NAD(+) = (2S)-2-amino-3-oxobutanoate + NADH + H(+). The protein operates within amino-acid degradation; L-threonine degradation via oxydo-reductase pathway; glycine from L-threonine: step 1/2. Catalyzes the NAD(+)-dependent oxidation of L-threonine to 2-amino-3-ketobutyrate. This Edwardsiella ictaluri (strain 93-146) protein is L-threonine 3-dehydrogenase.